A 253-amino-acid polypeptide reads, in one-letter code: DNA polymerase sliding clamp 2 (253 aa).

The protein belongs to the PCNA family. Homotrimer. The subunits circularize to form a toroid; DNA passes through its center. Replication factor C (RFC) is required to load the toroid on the DNA. Interacts with TIP.

With respect to regulation, inhibited by interaction with the PCNA inhibitor TIP. Sliding clamp subunit that acts as a moving platform for DNA processing. Responsible for tethering the catalytic subunit of DNA polymerase and other proteins to DNA during high-speed replication. The protein is DNA polymerase sliding clamp 2 of Thermococcus kodakarensis (strain ATCC BAA-918 / JCM 12380 / KOD1) (Pyrococcus kodakaraensis (strain KOD1)).